Consider the following 61-residue polypeptide: Large ribosomal subunit protein uL30 (61 aa).

Belongs to the universal ribosomal protein uL30 family. Part of the 50S ribosomal subunit.

The chain is Large ribosomal subunit protein uL30 from Bordetella avium (strain 197N).